A 200-amino-acid chain; its full sequence is Small ribosomal subunit protein uS4 (200 aa).

The disordered stretch occupies residues 1–43 (MARYTGPRGRRDRRAGVMLSSMRKNPLEKKPYPPGEHGRDRQR). Residues 25 to 43 (NPLEKKPYPPGEHGRDRQR) are compositionally biased toward basic and acidic residues. An S4 RNA-binding domain is found at 92 to 158 (LRMDNVVYRM…QPIQEAVEQV (67 aa)).

This sequence belongs to the universal ribosomal protein uS4 family. Part of the 30S ribosomal subunit. Contacts protein S5. The interaction surface between S4 and S5 is involved in control of translational fidelity.

One of the primary rRNA binding proteins, it binds directly to 16S rRNA where it nucleates assembly of the body of the 30S subunit. Functionally, with S5 and S12 plays an important role in translational accuracy. In Rubrobacter xylanophilus (strain DSM 9941 / JCM 11954 / NBRC 16129 / PRD-1), this protein is Small ribosomal subunit protein uS4.